The following is a 145-amino-acid chain: Arginine repressor (145 aa).

It belongs to the ArgR family.

It is found in the cytoplasm. The protein operates within amino-acid biosynthesis; L-arginine biosynthesis [regulation]. In terms of biological role, regulates arginine biosynthesis genes. In Streptococcus pyogenes serotype M6 (strain ATCC BAA-946 / MGAS10394), this protein is Arginine repressor.